We begin with the raw amino-acid sequence, 968 residues long: Isoleucine--tRNA ligase (968 aa).

The 'HIGH' region motif lies at 68-78 (PYANGALHMGH). Glutamate 582 serves as a coordination point for L-isoleucyl-5'-AMP. The 'KMSKS' region motif lies at 623 to 627 (KMSKS). Residue lysine 626 coordinates ATP. Zn(2+) contacts are provided by cysteine 936, cysteine 939, cysteine 956, and cysteine 959.

This sequence belongs to the class-I aminoacyl-tRNA synthetase family. IleS type 1 subfamily. As to quaternary structure, monomer. It depends on Zn(2+) as a cofactor.

Its subcellular location is the cytoplasm. It catalyses the reaction tRNA(Ile) + L-isoleucine + ATP = L-isoleucyl-tRNA(Ile) + AMP + diphosphate. Functionally, catalyzes the attachment of isoleucine to tRNA(Ile). As IleRS can inadvertently accommodate and process structurally similar amino acids such as valine, to avoid such errors it has two additional distinct tRNA(Ile)-dependent editing activities. One activity is designated as 'pretransfer' editing and involves the hydrolysis of activated Val-AMP. The other activity is designated 'posttransfer' editing and involves deacylation of mischarged Val-tRNA(Ile). The protein is Isoleucine--tRNA ligase of Prochlorococcus marinus (strain AS9601).